Consider the following 159-residue polypeptide: uncharacterized protein (159 aa).

This is an uncharacterized protein from Schizosaccharomyces pombe (strain 972 / ATCC 24843) (Fission yeast).